The chain runs to 353 residues: 3-deoxy-D-manno-octulosonic acid transferase (353 aa).

The active-site Proton acceptor is Glu-31. CMP contacts are provided by residues 211–212, 247–249, and 273–276; these read PR, FGI, and NLLE.

Belongs to the glycosyltransferase group 1 family. Glycosyltransferase 30 subfamily. As to quaternary structure, can form homodimer, homotrimer and homotetramer.

The protein resides in the cell inner membrane. It carries out the reaction lipid IVA (E. coli) + CMP-3-deoxy-beta-D-manno-octulosonate = alpha-Kdo-(2-&gt;6)-lipid IVA (E. coli) + CMP + H(+). It participates in bacterial outer membrane biogenesis; LPS core biosynthesis. Functionally, involved in lipopolysaccharide (LPS) biosynthesis. Catalyzes the transfer of a single 3-deoxy-D-manno-octulosonate (Kdo) residue from CMP-Kdo to lipid IV(A), the tetraacyldisaccharide-1,4'-bisphosphate precursor of lipid A. Is strictly monofunctional, i.e. is capable of adding only a single Kdo residue to the acceptor lipid. This Aquifex aeolicus (strain VF5) protein is 3-deoxy-D-manno-octulosonic acid transferase (kdtA).